The following is a 167-amino-acid chain: NAD(P)H-quinone oxidoreductase subunit I, chloroplastic (167 aa).

4Fe-4S ferredoxin-type domains follow at residues 55–84 (GRIH…VDWK) and 95–124 (LNYS…MTEE). [4Fe-4S] cluster contacts are provided by Cys-64, Cys-67, Cys-70, Cys-74, Cys-104, Cys-107, Cys-110, and Cys-114.

Belongs to the complex I 23 kDa subunit family. In terms of assembly, NDH is composed of at least 16 different subunits, 5 of which are encoded in the nucleus. [4Fe-4S] cluster is required as a cofactor.

The protein resides in the plastid. It is found in the chloroplast thylakoid membrane. The enzyme catalyses a plastoquinone + NADH + (n+1) H(+)(in) = a plastoquinol + NAD(+) + n H(+)(out). It catalyses the reaction a plastoquinone + NADPH + (n+1) H(+)(in) = a plastoquinol + NADP(+) + n H(+)(out). In terms of biological role, NDH shuttles electrons from NAD(P)H:plastoquinone, via FMN and iron-sulfur (Fe-S) centers, to quinones in the photosynthetic chain and possibly in a chloroplast respiratory chain. The immediate electron acceptor for the enzyme in this species is believed to be plastoquinone. Couples the redox reaction to proton translocation, and thus conserves the redox energy in a proton gradient. The polypeptide is NAD(P)H-quinone oxidoreductase subunit I, chloroplastic (Lepidium virginicum (Virginia pepperweed)).